A 627-amino-acid polypeptide reads, in one-letter code: Bromodomain adjacent to zinc finger domain protein 1A (627 aa).

Residues 222-272 (NARCKVCRKKGDGESMVLCDGCDRGHHIYCVRPKLKYVPEGDWFCPECHPK) form a PHD-type zinc finger. The segment at 270-503 (HPKQRSHRLP…NRRSSGRHHG (234 aa)) is disordered. Residues 272 to 283 (KQRSHRLPSRHR) show a composition bias toward basic residues. The stretch at 281 to 327 (RHRYSMDSDEEEEEELDQKEEEEEEEEQEELSESENEQEDEMSEEES) forms a coiled coil. Residues 287–326 (DSDEEEEEELDQKEEEEEEEEQEELSESENEQEDEMSEEE) show a composition bias toward acidic residues. Positions 348-359 (TGKLGPKPKTGK) are enriched in low complexity. 2 stretches are compositionally biased toward polar residues: residues 386–395 (EPTSRLSASD) and 402–412 (SPNSSLVNVVT). Residues 417–431 (GRGKGKGRGRGRGRL) are compositionally biased toward basic residues. A compositionally biased stretch (polar residues) spans 486–496 (DISSLEQGNRR). The Bromo domain maps to 502–605 (HGVHELSACE…SFFITEAQNL (104 aa)).

The protein belongs to the WAL family. Together with p18 and p20 proteins, it forms the Xenopus version of CHRAC. Post-translationally, phosphorylated in mitosis.

Its subcellular location is the nucleus. Its function is as follows. Regulatory subunit of a chromatin remodeling complex, which forms ordered nucleosome arrays on chromatin and slides edge- and center-positioned histone octamers away from their original location on the DNA template to facilitate access to DNA during DNA-templated processes such as DNA replication, transcription, and repair. Involved in regulating the spacing of nucleosomes along the chromatin and have the ability to slide mononucleosomes to the center of a DNA template in an ATP-dependent manner. May play a role in transcriptional regulation. This is Bromodomain adjacent to zinc finger domain protein 1A (baz1a) from Xenopus laevis (African clawed frog).